Here is a 354-residue protein sequence, read N- to C-terminus: Uroporphyrinogen decarboxylase (354 aa).

Substrate contacts are provided by residues 27-31, Asp77, Tyr154, Thr209, and His327; that span reads RQAGR.

Belongs to the uroporphyrinogen decarboxylase family. Homodimer.

The protein localises to the cytoplasm. It catalyses the reaction uroporphyrinogen III + 4 H(+) = coproporphyrinogen III + 4 CO2. It participates in porphyrin-containing compound metabolism; protoporphyrin-IX biosynthesis; coproporphyrinogen-III from 5-aminolevulinate: step 4/4. In terms of biological role, catalyzes the decarboxylation of four acetate groups of uroporphyrinogen-III to yield coproporphyrinogen-III. This is Uroporphyrinogen decarboxylase from Klebsiella pneumoniae (strain 342).